We begin with the raw amino-acid sequence, 346 residues long: Peroxidase 37 (346 aa).

The signal sequence occupies residues 1 to 22; sequence MHSSLIKLGFLLLLIQVSLSHA. The residue at position 23 (Gln23) is a Pyrrolidone carboxylic acid. 4 cysteine pairs are disulfide-bonded: Cys33–Cys113, Cys66–Cys71, Cys119–Cys323, and Cys199–Cys231. His64 acts as the Proton acceptor in catalysis. Ca(2+)-binding residues include Asp65, Val68, Gly70, Asp72, and Ser74. A glycan (N-linked (GlcNAc...) asparagine) is linked at Asn79. Pro161 contributes to the substrate binding site. His192 lines the heme b pocket. Residue Thr193 participates in Ca(2+) binding. Asn208 and Asn236 each carry an N-linked (GlcNAc...) asparagine glycan. Residues Asp244, Thr247, and Asp252 each contribute to the Ca(2+) site.

It belongs to the peroxidase family. Classical plant (class III) peroxidase subfamily. Requires heme b as cofactor. Ca(2+) serves as cofactor.

It is found in the secreted. It localises to the vacuole. The enzyme catalyses 2 a phenolic donor + H2O2 = 2 a phenolic radical donor + 2 H2O. Functionally, removal of H(2)O(2), oxidation of toxic reductants, biosynthesis and degradation of lignin, suberization, auxin catabolism, response to environmental stresses such as wounding, pathogen attack and oxidative stress. These functions might be dependent on each isozyme/isoform in each plant tissue. The protein is Peroxidase 37 (PER37) of Arabidopsis thaliana (Mouse-ear cress).